Consider the following 401-residue polypeptide: Jumonji C domain-containing protein 5 (401 aa).

The 147-residue stretch at 255-401 (EYLAQHELFA…PSFSVSFWWE (147 aa)) folds into the JmjC domain. Residues H306, D308, and H385 each contribute to the Fe cation site.

Fe(2+) serves as cofactor. In terms of tissue distribution, expressed in neurons close to the dorsal lateral neurons involved in circadian rhythm.

It is found in the nucleus. The protein localises to the nucleoplasm. It localises to the cytoplasm. It catalyses the reaction L-arginyl-[protein] + 2-oxoglutarate + O2 = (3R)-3-hydroxy-L-arginyl-[protein] + succinate + CO2. In terms of biological role, bifunctional enzyme that acts both as an endopeptidase and 2-oxoglutarate-dependent monooxygenase. May be involved in regulation of behavior and circadian rhythms. In Drosophila melanogaster (Fruit fly), this protein is Jumonji C domain-containing protein 5.